A 188-amino-acid polypeptide reads, in one-letter code: HGPRTase-like protein 1 (188 aa).

This sequence belongs to the purine/pyrimidine phosphoribosyltransferase family. Archaeal HPRT subfamily.

Its function is as follows. May catalyze a purine salvage reaction, the substrate is unknown. The sequence is that of HGPRTase-like protein 1 from Haloquadratum walsbyi (strain DSM 16854 / JCM 12705 / C23).